The sequence spans 340 residues: Formimidoylglutamase (340 aa).

Mn(2+) contacts are provided by H129, D160, H162, D164, D257, and D259.

Belongs to the arginase family. Mn(2+) is required as a cofactor.

The enzyme catalyses N-formimidoyl-L-glutamate + H2O = formamide + L-glutamate. Its pathway is amino-acid degradation; L-histidine degradation into L-glutamate; L-glutamate from N-formimidoyl-L-glutamate (hydrolase route): step 1/1. In terms of biological role, catalyzes the conversion of N-formimidoyl-L-glutamate to L-glutamate and formamide. This Vibrio parahaemolyticus serotype O3:K6 (strain RIMD 2210633) protein is Formimidoylglutamase.